Consider the following 380-residue polypeptide: Flap endonuclease 1 (380 aa).

The segment at 1–104 is N-domain; the sequence is MGIQGLAKLI…GELAKRSERR (104 aa). R19 is modified (symmetric dimethylarginine; by PRMT5). D34 contributes to the Mg(2+) binding site. Positions 47 and 70 each coordinate DNA. The residue at position 80 (K80) is an N6-acetyllysine. A Mg(2+)-binding site is contributed by D86. Residues R100 and R104 each carry the symmetric dimethylarginine; by PRMT5 modification. An I-domain region spans residues 122–253; the sequence is EVEKFTKRLV…KRAVDLIQKH (132 aa). Mg(2+) contacts are provided by E158, E160, D179, and D181. Position 158 (E158) interacts with DNA. S187 carries the post-translational modification Phosphoserine; by CDK2. R192 carries the symmetric dimethylarginine; by PRMT5 modification. S197 carries the post-translational modification Phosphoserine. DNA is bound by residues G231 and D233. Residue D233 participates in Mg(2+) binding. Phosphoserine is present on residues S255, S293, and S335. Phosphothreonine is present on T336. The interaction with PCNA stretch occupies residues 336 to 344; that stretch reads TQGRLDDFF. The interval 349-380 is disordered; it reads SLSSAKRKEPEPKGAAKKKQRLGPAGKFKRGK. N6-acetyllysine occurs at positions 354, 375, 377, and 380. The segment covering 363-380 has biased composition (basic residues); the sequence is AAKKKQRLGPAGKFKRGK.

It belongs to the XPG/RAD2 endonuclease family. FEN1 subfamily. Interacts with PCNA. Three molecules of FEN1 bind to one PCNA trimer with each molecule binding to one PCNA monomer. PCNA stimulates the nuclease activity without altering cleavage specificity. The C-terminal domain binds EP300; can bind simultaneously to both PCNA and EP300. Interacts with DDX11; this interaction is direct and increases flap endonuclease activity of FEN1. Interacts with WDR4; regulating its endonuclease activity. Interacts with POLB. Mg(2+) is required as a cofactor. Acetylated by EP300. Acetylation inhibits both endonuclease and exonuclease activity. Acetylation also reduces DNA-binding activity but does not affect interaction with PCNA or EP300. In terms of processing, phosphorylation upon DNA damage induces relocalization to the nuclear plasma. Phosphorylation at Ser-187 by CDK2 occurs during late S-phase and results in dissociation from PCNA. Post-translationally, methylation at Arg-192 by PRMT5 impedes Ser-187 phosphorylation and increases interaction with PCNA.

It localises to the nucleus. The protein resides in the nucleolus. Its subcellular location is the nucleoplasm. The protein localises to the mitochondrion. Functionally, structure-specific nuclease with 5'-flap endonuclease and 5'-3' exonuclease activities involved in DNA replication and repair. During DNA replication, cleaves the 5'-overhanging flap structure that is generated by displacement synthesis when DNA polymerase encounters the 5'-end of a downstream Okazaki fragment. It enters the flap from the 5'-end and then tracks to cleave the flap base, leaving a nick for ligation. Also involved in the long patch base excision repair (LP-BER) pathway, by cleaving within the apurinic/apyrimidinic (AP) site-terminated flap. Acts as a genome stabilization factor that prevents flaps from equilibrating into structures that lead to duplications and deletions. Also possesses 5'-3' exonuclease activity on nicked or gapped double-stranded DNA, and exhibits RNase H activity. Also involved in replication and repair of rDNA and in repairing mitochondrial DNA. The polypeptide is Flap endonuclease 1 (Ovis aries (Sheep)).